The chain runs to 248 residues: Triosephosphate isomerase (248 aa).

Asn-10 and Lys-12 together coordinate D-glyceraldehyde 3-phosphate. His-95 (electrophile) is an active-site residue. Glu-165 functions as the Proton acceptor in the catalytic mechanism. D-glyceraldehyde 3-phosphate contacts are provided by residues Gly-171, Leu-230, and 232 to 233 (GN).

Belongs to the triosephosphate isomerase family. Homodimer.

It catalyses the reaction D-glyceraldehyde 3-phosphate = dihydroxyacetone phosphate. It functions in the pathway carbohydrate biosynthesis; gluconeogenesis. It participates in carbohydrate degradation; glycolysis; D-glyceraldehyde 3-phosphate from glycerone phosphate: step 1/1. Its function is as follows. Catalyzes the interconversion of glyceraldehyde 3-phosphate and dihydroxyacetone phosphate in the glycolytic and gluconeogenic pathways. In Plasmodium falciparum (isolate 3D7), this protein is Triosephosphate isomerase.